The sequence spans 162 residues: NADH-quinone oxidoreductase subunit I (162 aa).

4Fe-4S ferredoxin-type domains follow at residues 52-82 (LRRYPNGEERCIACKLCEAVCPAQAITIEAG) and 93-122 (VRYDIDMVKCIYCGLCQEACPVDAIVEGPN). Residues Cys-62, Cys-65, Cys-68, Cys-72, Cys-102, Cys-105, Cys-108, and Cys-112 each contribute to the [4Fe-4S] cluster site.

Belongs to the complex I 23 kDa subunit family. As to quaternary structure, NDH-1 is composed of 14 different subunits. Subunits NuoA, H, J, K, L, M, N constitute the membrane sector of the complex. Requires [4Fe-4S] cluster as cofactor.

It localises to the cell inner membrane. The enzyme catalyses a quinone + NADH + 5 H(+)(in) = a quinol + NAD(+) + 4 H(+)(out). In terms of biological role, NDH-1 shuttles electrons from NADH, via FMN and iron-sulfur (Fe-S) centers, to quinones in the respiratory chain. The immediate electron acceptor for the enzyme in this species is believed to be ubiquinone. Couples the redox reaction to proton translocation (for every two electrons transferred, four hydrogen ions are translocated across the cytoplasmic membrane), and thus conserves the redox energy in a proton gradient. The chain is NADH-quinone oxidoreductase subunit I from Bradyrhizobium sp. (strain ORS 278).